The primary structure comprises 172 residues: Large ribosomal subunit protein uL10 (172 aa).

Belongs to the universal ribosomal protein uL10 family. Part of the ribosomal stalk of the 50S ribosomal subunit. The N-terminus interacts with L11 and the large rRNA to form the base of the stalk. The C-terminus forms an elongated spine to which L12 dimers bind in a sequential fashion forming a multimeric L10(L12)X complex.

Forms part of the ribosomal stalk, playing a central role in the interaction of the ribosome with GTP-bound translation factors. The sequence is that of Large ribosomal subunit protein uL10 from Chlamydia trachomatis serovar L2 (strain ATCC VR-902B / DSM 19102 / 434/Bu).